We begin with the raw amino-acid sequence, 4749 residues long: E3 ubiquitin-protein ligase MYCBP2 (4749 aa).

Disordered stretches follow at residues 87–127, 170–192, and 609–628; these read DRDQ…RSKS, AASKNSVQSGESDSDEEEESREP, and ASKGEDGESTKSRRQSKPYK. The segment covering 100–124 has biased composition (basic residues); that stretch reads SRNKKILNKKKLKRKQKSKSKVKTR. S127, S178, S181, and S183 each carry phosphoserine. 5 RCC1 repeats span residues 600-655, 699-755, 907-957, 958-1009, and 1011-1066; these read DGSV…VISK, NGEV…MMCP, KRDK…VLME, NGDV…LLMD, and QVFT…LRID. Basic residues predominate over residues 899 to 910; the sequence is SHPAQLKHKRDK. A disordered region spans residues 899-928; the sequence is SHPAQLKHKRDKHKDGSGDRGEKDASKITT. Over residues 911–924 the composition is skewed to basic and acidic residues; sequence HKDGSGDRGEKDAS. Positions 1235–1386 are PHR domain 1; that stretch reads NRFESHGGGW…GQIPQLLYRL (152 aa). Phosphoserine is present on S1621. A PHR domain 2 region spans residues 1723 to 1881; it reads NRFTKTSQGR…GQIPQILYYR (159 aa). A disulfide bond links C1745 and C1860. The segment at 2018 to 2544 is RAE1 binding; sequence AVIESEHPYK…FNQHLGKSLL (527 aa). Disordered stretches follow at residues 2313-2336 and 2780-3084; these read KKTSLQQDQGKKCQRIPGSPSAAA and QQRQ…KGDG. A Filamin repeat occupies 2331 to 2438; sequence SPSAAASSAD…IDAGLEVKVK (108 aa). A compositionally biased stretch (polar residues) spans 2780–2803; sequence QQRQLQSDRGTISTSSRPVSTSGK. Basic and acidic residues predominate over residues 2814 to 2832; sequence VKPDGHVSRTPADQKKPRG. A Phosphoserine modification is found at S2841. The segment covering 2847-2857 has biased composition (basic and acidic residues); that stretch reads DAAKLRSDSHS. The span at 2858–2879 shows a compositional bias: polar residues; sequence RSLSPNHNTLQTLKSDGRTSSG. A phosphoserine mark is found at S2859 and S2861. Composition is skewed to low complexity over residues 2884–2894 and 2904–2917; these read SPGPGSRSSSP and SSPSGASSPRSSSP. Residues S2905 and S2911 each carry the phosphoserine modification. Residues 2918–2929 are compositionally biased toward polar residues; it reads QDKNLPQKSTAP. Residues 2932–2943 are compositionally biased toward basic and acidic residues; the sequence is TKLDPPRERSKS. 3 positions are modified to phosphoserine: S2941, S2943, and S2992. Residues 3008-3021 are compositionally biased toward polar residues; that stretch reads CTSSTLKTNGVTDS. Composition is skewed to basic and acidic residues over residues 3027–3037 and 3047–3056; these read GDLKSVDEGSN and PLKDEQEMRA. Position 3057 is a phosphoserine (S3057). Basic residues predominate over residues 3060 to 3073; the sequence is ISRKCANRHTRPKK. 3 positions are modified to phosphoserine: S3162, S3550, and S3577. A disordered region spans residues 3677–3700; that stretch reads VEAEEDEDEDNKSNKENAEQEKDT. The segment covering 3687 to 3700 has biased composition (basic and acidic residues); that stretch reads NKSNKENAEQEKDT. The DOC domain occupies 3789-3967; the sequence is FSISVQSGFE…SVAQQRSCEA (179 aa). Residues 3986–4007 form a disordered region; that stretch reads SGDAEPTPEQEEKALLSSPEGE. Position 3992 is a phosphothreonine (T3992). 2 positions are modified to phosphoserine: S4002 and S4003. Residues C4499, C4502, C4517, H4519, H4522, C4525, C4546, C4549, C4615, and C4618 each coordinate Zn(2+). An RING-type; atypical zinc finger spans residues 4499–4550; the sequence is CMICFTEALSAAPAIQLDCSHVFHLQCCRRVLENRWLGPRITFGFISCPICK. Residues 4610–4747 form a tandem cysteine domain region; the sequence is YAYYVCYKCR…LGCGVCRNAH (138 aa). The active site involves C4629. 7 residues coordinate Zn(2+): C4646, C4649, C4658, H4661, C4670, C4673, and C4674. C4681 is an active-site residue. C4688, C4691, C4709, C4723, H4729, C4740, and C4743 together coordinate Zn(2+).

It belongs to the RING-Cys relay (RCR) family. As to quaternary structure, interacts with MYC. Interacts with TSC2 (tuberin) when TSC2 is in complex with TSC1 (hamartin). Interacts with FBXO45. Interacts with RAE1. Interacts with CPNE1 (via VWFA domain) and CPNE4 (via VWFA domain). Interacts with (sumoylated) RANGAP1; interaction with sumoylated RANGAP1 inhibits E3 ubiquitin-protein ligase activity and promotes MYCBP2 translocation to the nucleus. Interacts with RAN. Interacts with ATP13A2; the interaction inhibits the ubiquitination of TSC2 by MYCBP2. Interacts with USP11. In terms of processing, autoubiquitinated. Expression is mostly restricted to the nervous system, including expression in motor and sensory axons. During postnatal development, expression is particularly strong in the cerebellum, hippocampus and retina. Lower levels of expression are observed throughout the cerebral cortex.

The protein localises to the nucleus. It localises to the cell projection. Its subcellular location is the axon. It is found in the cytoplasm. The protein resides in the cytoskeleton. The enzyme catalyses [E2 ubiquitin-conjugating enzyme]-S-ubiquitinyl-L-cysteine + [acceptor protein]-L-threonine = [E2 ubiquitin-conjugating enzyme]-L-cysteine + [acceptor protein]-3-O-ubiquitinyl-L-threonine.. It participates in protein modification; protein ubiquitination. Its function is as follows. Atypical E3 ubiquitin-protein ligase which specifically mediates ubiquitination of threonine and serine residues on target proteins, instead of ubiquitinating lysine residues. Shows esterification activity towards both threonine and serine, with a preference for threonine, and acts via two essential catalytic cysteine residues that relay ubiquitin to its substrate via thioester intermediates. Interacts with the E2 enzymes UBE2D1, UBE2D3, UBE2E1 and UBE2L3. Plays a key role in neural development, probably by mediating ubiquitination of threonine residues on target proteins. Involved in different processes such as regulation of neurite outgrowth, synaptic growth, synaptogenesis and axon degeneration. Required for the formation of major central nervous system axon tracts. Required for proper axon growth by regulating axon navigation and axon branching: acts by regulating the subcellular location and stability of MAP3K12/DLK. Required for proper localization of retinogeniculate projections but not for eye-specific segregation. Regulates axon guidance in the olfactory system. Involved in Wallerian axon degeneration, an evolutionarily conserved process that drives the loss of damaged axons: acts by promoting destabilization of NMNAT2, probably via ubiquitination of NMNAT2. Catalyzes ubiquitination of threonine and/or serine residues on NMNAT2, consequences of threonine and/or serine ubiquitination are however unknown. Regulates the internalization of TRPV1 in peripheral sensory neurons. May mediate ubiquitination and subsequent proteasomal degradation of TSC2/tuberin. Independently of the E3 ubiquitin-protein ligase activity, also acts as a guanosine exchange factor (GEF) for RAN in neurons of dorsal root ganglia. May function as a facilitator or regulator of transcriptional activation by MYC. Acts in concert with HUWE1 to regulate the circadian clock gene expression by promoting the lithium-induced ubiquination and degradation of NR1D1. The chain is E3 ubiquitin-protein ligase MYCBP2 from Mus musculus (Mouse).